The primary structure comprises 1201 residues: Vitamin B12-dependent ribonucleotide reductase (1201 aa).

Substrate is bound by residues Ser153, Ala198–Cys199, Gly230, Asn482–Glu486, and Pro683–Ile687. A disulfide bond links Cys199 and Cys495. Catalysis depends on Asn482, which acts as the Proton acceptor. Catalysis depends on Cys484, which acts as the Cysteine radical intermediate. Glu486 (proton acceptor) is an active-site residue. Positions Asp1100–Thr1118 are enriched in basic and acidic residues. Positions Asp1100–Ser1120 are disordered.

This sequence belongs to the ribonucleoside diphosphate reductase class-2 family. Adenosylcob(III)alamin is required as a cofactor.

It carries out the reaction a 2'-deoxyribonucleoside 5'-diphosphate + [thioredoxin]-disulfide + H2O = a ribonucleoside 5'-diphosphate + [thioredoxin]-dithiol. Its function is as follows. Catalyzes the reduction of ribonucleotides to deoxyribonucleotides. May function to provide a pool of deoxyribonucleotide precursors for DNA repair during oxygen limitation and/or for immediate growth after restoration of oxygen. The polypeptide is Vitamin B12-dependent ribonucleotide reductase (nrdJ) (Leptospira interrogans serogroup Icterohaemorrhagiae serovar Lai (strain 56601)).